The following is a 1113-amino-acid chain: Receptor-type guanylate cyclase gcy-18 (1113 aa).

The signal sequence occupies residues 1–18 (MLKTLLFILIFFNIPIIA). The Extracellular portion of the chain corresponds to 19-499 (IEEIPDIKEN…RGQRCSYLLE (481 aa)). Asn72, Asn369, and Asn456 each carry an N-linked (GlcNAc...) asparagine glycan. The chain crosses the membrane as a helical span at residues 500–520 (ISVGSLIILLILISVVFFFLF). The Cytoplasmic portion of the chain corresponds to 521–1113 (RYCENKQLEK…TNYIQNVEGV (593 aa)). A Protein kinase domain is found at 543–848 (IDEEQVKSMM…RVRLNTEMVL (306 aa)). The stretch at 853-884 (SLVDQMMKMMEQYANNLEKLVAERTGMLEEAN) forms a coiled coil. The Guanylate cyclase domain occupies 918–1048 (TILFSDIVGF…DTVNVSSRME (131 aa)). Positions 923, 924, and 967 each coordinate Mg(2+).

The protein belongs to the adenylyl cyclase class-4/guanylyl cyclase family. As to expression, expressed specifically in AFD sensory neurons.

It is found in the cell membrane. The protein localises to the cell projection. Its subcellular location is the cilium. The enzyme catalyses GTP = 3',5'-cyclic GMP + diphosphate. Guanylate cyclase involved in the production of the second messenger cGMP. Regulates thermotaxis responses in AFD sensory neurons. May regulate AFD neuronal activity such as calcium responses to temperature gradients. In Caenorhabditis elegans, this protein is Receptor-type guanylate cyclase gcy-18.